We begin with the raw amino-acid sequence, 338 residues long: UDP-glucose 4-epimerase (338 aa).

NAD(+)-binding positions include 11–12, 31–36, 58–59, 80–84, Asn-99, Ser-124, Tyr-149, Lys-153, and Phe-178; these read YI, DNLCNS, DI, and FAGLK. The substrate site is built by Ser-124 and Tyr-149. Tyr-149 acts as the Proton acceptor in catalysis. Residues Asn-179, 199–200, 216–218, Arg-231, 292–295, and Tyr-299 each bind substrate; these read NL, AIF, and REGD.

The protein belongs to the NAD(P)-dependent epimerase/dehydratase family. In terms of assembly, homodimer. NAD(+) serves as cofactor.

The catalysed reaction is UDP-alpha-D-glucose = UDP-alpha-D-galactose. It participates in carbohydrate metabolism; galactose metabolism. Its activity is regulated as follows. Inhibited by UDP-phenol and NaBH3CN. Its function is as follows. Involved in the metabolism of galactose. Catalyzes the conversion of UDP-galactose (UDP-Gal) to UDP-glucose (UDP-Glc) through a mechanism involving the transient reduction of NAD. It is only active on UDP-galactose and UDP-glucose. The sequence is that of UDP-glucose 4-epimerase (galE) from Escherichia coli (strain K12).